The sequence spans 270 residues: uncharacterized protein (270 aa).

Positions 1–10 (MFGLKVKDAT) are enriched in basic and acidic residues. 2 disordered regions span residues 1–115 (MFGL…PTPW) and 215–236 (QTGFDTDDTDNKKQGFRKQGEQ). Low complexity-rich tracts occupy residues 26-41 (SSSSSTTSSTSTTQRG) and 98-113 (GTSPSSSESGQSGTPT).

This sequence belongs to the adhesin P1 family.

This is an uncharacterized protein from Mycoplasma pneumoniae (strain ATCC 29342 / M129 / Subtype 1) (Mycoplasmoides pneumoniae).